The primary structure comprises 809 residues: WD repeat protein iqw1 (809 aa).

WD repeat units follow at residues 43-82 (GHTG…KPRH), 87-128 (GHVQ…EGGM), 141-180 (CALD…VCNQ), 193-233 (PYRI…KSFR), and 241-295 (SPEK…LFHV). The segment at 599-644 (SMYTGHSDLNDDDDDYQDEESYSYASDDDDESDEDSDEGPTLLSLR) is disordered. The span at 608 to 636 (NDDDDDYQDEESYSYASDDDDESDEDSDE) shows a compositional bias: acidic residues. WD repeat units lie at residues 668–708 (CNVE…ILAI) and 711–750 (GDSE…PSGC).

As to quaternary structure, interacts with ddb1.

It localises to the cytoplasm. Functionally, ligand-dependent coactivator of nuclear receptors that may function as a substrate receptor for CUL4-DDB1 E3 ubiquitin-protein ligase complex. The polypeptide is WD repeat protein iqw1 (iqw1) (Schizosaccharomyces pombe (strain 972 / ATCC 24843) (Fission yeast)).